The primary structure comprises 310 residues: N-acetylmuramic acid 6-phosphate etherase (310 aa).

The 164-residue stretch at 64-227 (ITARLKSKGR…STSVMIKLGK (164 aa)) folds into the SIS domain. The active-site Proton donor is the Glu-92. Glu-123 is a catalytic residue.

It belongs to the GCKR-like family. MurNAc-6-P etherase subfamily. As to quaternary structure, homodimer.

It carries out the reaction N-acetyl-D-muramate 6-phosphate + H2O = N-acetyl-D-glucosamine 6-phosphate + (R)-lactate. The protein operates within amino-sugar metabolism; N-acetylmuramate degradation. Functionally, specifically catalyzes the cleavage of the D-lactyl ether substituent of MurNAc 6-phosphate, producing GlcNAc 6-phosphate and D-lactate. This is N-acetylmuramic acid 6-phosphate etherase from Prochlorococcus marinus (strain NATL1A).